A 233-amino-acid polypeptide reads, in one-letter code: MAKLTKRMRVIREKVDATKAYDINEAITLLKELATAKFVESVDVAVNLGVDPRKSDQNVRGAIVLPHGTGRDVRVAVFTQGANAEAAKEAGAELVGMEDLAEQVKAGEMNFDVVIASPDAMRVVGMLGQILGPRGLMPNPKTGTVTPNVAEAVKNAKAGQVRYRNDKNGIIHTTIGKVDFDSVKLKENLEALLVALKKQKPAAAKGQYVKKVSISTTMGAGVAVDQNTLEATA.

This sequence belongs to the universal ribosomal protein uL1 family. Part of the 50S ribosomal subunit.

Binds directly to 23S rRNA. The L1 stalk is quite mobile in the ribosome, and is involved in E site tRNA release. Functionally, protein L1 is also a translational repressor protein, it controls the translation of the L11 operon by binding to its mRNA. The protein is Large ribosomal subunit protein uL1 of Shewanella amazonensis (strain ATCC BAA-1098 / SB2B).